The primary structure comprises 305 residues: Dermonecrotic toxin LrSicTox-alphaIA1ii (305 aa).

A signal peptide spans 1-18 (MLLYVTLILGCWSAFSES). A propeptide spanning residues 19 to 26 (AETDVAER) is cleaved from the precursor. Residue histidine 37 is part of the active site. 2 residues coordinate Mg(2+): glutamate 57 and aspartate 59. The active-site Nucleophile is the histidine 73. 2 disulfide bridges follow: cysteine 77-cysteine 83 and cysteine 79-cysteine 222. Aspartate 117 provides a ligand contact to Mg(2+). Asparagine 282 carries an N-linked (GlcNAc...) asparagine glycan.

This sequence belongs to the arthropod phospholipase D family. Class II subfamily. Class IIa sub-subfamily. Requires Mg(2+) as cofactor. As to expression, expressed by the venom gland.

Its subcellular location is the secreted. It carries out the reaction an N-(acyl)-sphingosylphosphocholine = an N-(acyl)-sphingosyl-1,3-cyclic phosphate + choline. The enzyme catalyses an N-(acyl)-sphingosylphosphoethanolamine = an N-(acyl)-sphingosyl-1,3-cyclic phosphate + ethanolamine. It catalyses the reaction a 1-acyl-sn-glycero-3-phosphocholine = a 1-acyl-sn-glycero-2,3-cyclic phosphate + choline. The catalysed reaction is a 1-acyl-sn-glycero-3-phosphoethanolamine = a 1-acyl-sn-glycero-2,3-cyclic phosphate + ethanolamine. Inhibited with low affinity by edelfosine. Dermonecrotic toxins cleave the phosphodiester linkage between the phosphate and headgroup of certain phospholipids (sphingolipid and lysolipid substrates), forming an alcohol (often choline) and a cyclic phosphate. This toxin acts on sphingomyelin (SM). It also acts on a broad range of lysophospholipids, like lysophosphatidylinositol (LPI), lysophosphatidylglycerol (LPG), lysophosphatidylethanolamine (LPE), lysobisphosphatidic acid (LBPA), lysophosphatidylserine (LPS) and lysophosphatidylcholines (LPC) of varying chain lengths. The substrate preference is LPI &gt; LPG &gt; LPS &gt; LPC &gt;&gt; LPE, LBPA. Furthermore, the enzyme also act on cyclic phosphatidic acid and lyso-platelet activating factor (LPAF, an alkyl-LPC). The enzyme does not act on sphingosylphosphorylcholine (SPC, also known as lyso-sphingomyelin) and PAF. The toxin may also act on ceramide phosphoethanolamine (CPE). It acts by transphosphatidylation, releasing exclusively cyclic phosphate products as second products. It does not exhibit detectable PLA1/2 activity. It induces dose-dependent hemolysis and dermonecrosis. Also induces increased vascular permeability, edema, inflammatory response, and platelet aggregation. The chain is Dermonecrotic toxin LrSicTox-alphaIA1ii from Loxosceles reclusa (Brown recluse spider).